A 221-amino-acid polypeptide reads, in one-letter code: Eukaryotic translation initiation factor 3 subunit K (221 aa).

One can recognise a PCI domain in the interval 46 to 207; it reads YDLEANLACL…NIKTKHITEK (162 aa).

Belongs to the eIF-3 subunit K family. As to quaternary structure, component of the eukaryotic translation initiation factor 3 (eIF-3) complex.

Its subcellular location is the cytoplasm. Component of the eukaryotic translation initiation factor 3 (eIF-3) complex, which is involved in protein synthesis of a specialized repertoire of mRNAs and, together with other initiation factors, stimulates binding of mRNA and methionyl-tRNAi to the 40S ribosome. The eIF-3 complex specifically targets and initiates translation of a subset of mRNAs involved in cell proliferation. The protein is Eukaryotic translation initiation factor 3 subunit K of Culex quinquefasciatus (Southern house mosquito).